The chain runs to 250 residues: Indole-3-glycerol phosphate synthase (250 aa).

It belongs to the TrpC family.

The catalysed reaction is 1-(2-carboxyphenylamino)-1-deoxy-D-ribulose 5-phosphate + H(+) = (1S,2R)-1-C-(indol-3-yl)glycerol 3-phosphate + CO2 + H2O. Its pathway is amino-acid biosynthesis; L-tryptophan biosynthesis; L-tryptophan from chorismate: step 4/5. The sequence is that of Indole-3-glycerol phosphate synthase from Bacillus pumilus (strain SAFR-032).